A 633-amino-acid chain; its full sequence is MNNVLNSGRTTICDAYNVVAHDPFSFEHKSLDTIQKEWMEWKRTDHSLYVAPVVGTVSSFLLKKVGSLIGKRILSELWGIIFPSGSTNLMQDILRETEQFLNQRLNTDTLARVNAELIGLQANIREFNQQVDNFLNPTQNPVPLSITSSVNTMQQLFLNRLPQFQIQGYQLLLLPLFAQAANMHLSFIRDVILNADEWGISAATLRTYRDYLRNYTRDYSNYCINTYQTAFRGLNTRLHDMLEFRTYMFLNVFEYVSIWSLFKYQSLMVSSGANLYASGSGPQQTQSFTAQNWPFLYSLFQVNSNYILSGISGTRLSITFPNIGGLPGSTTTHSLNSARVNYSGGVSSGLIGATNLNHNFNCSTVLPPLSTPFVRSWLDSGTDREGVATSTNWQTESFQTTLSLRCGAFSARGNSNYFPDYFIRNISGVPLVIRNEDLTRPLHYNQIRNIESPSGTPGGARAYLVSVHNRKNNIYAANENGTMIHLAPEDYTGFTISPIHATQVNNQTRTFISEKFGNQGDSLRFEQSNTTARYTLRGNGNSYNLYLRVSSIGNSTIRVTINGRVYTVSNVNTTTNNDGVNDNGARFSDINIGNIVASDNTNVTLDINVTLNSGTPFDLMNIMFVPTNLPPLY.

It belongs to the delta endotoxin family.

In terms of biological role, promotes colloidosmotic lysis by binding to the midgut epithelial cells of both dipteran (Aedes aegypti) and lepidopteran (Manduca sexta) larvae. The polypeptide is Pesticidal crystal protein Cry2Aa (cry2Aa) (Bacillus thuringiensis subsp. kurstaki).